Consider the following 505-residue polypeptide: ATP synthase subunit alpha, chloroplastic (505 aa).

170–177 (GDRQTGKT) serves as a coordination point for ATP.

The protein belongs to the ATPase alpha/beta chains family. F-type ATPases have 2 components, CF(1) - the catalytic core - and CF(0) - the membrane proton channel. CF(1) has five subunits: alpha(3), beta(3), gamma(1), delta(1), epsilon(1). CF(0) has four main subunits: a, b, b' and c.

The protein resides in the plastid. It is found in the chloroplast thylakoid membrane. The catalysed reaction is ATP + H2O + 4 H(+)(in) = ADP + phosphate + 5 H(+)(out). In terms of biological role, produces ATP from ADP in the presence of a proton gradient across the membrane. The alpha chain is a regulatory subunit. The chain is ATP synthase subunit alpha, chloroplastic from Oenothera parviflora (Small-flowered evening primrose).